Here is a 134-residue protein sequence, read N- to C-terminus: 4-carboxymuconolactone decarboxylase (134 aa).

It belongs to the carboxymuconolactone decarboxylase family.

It carries out the reaction (R)-2-(carboxymethyl)-5-oxo-2,5-dihydro-2-furoate + H(+) = (4,5-dihydro-5-oxofuran-2-yl)-acetate + CO2. The protein operates within aromatic compound metabolism; beta-ketoadipate pathway; 5-oxo-4,5-dihydro-2-furylacetate from 3-carboxy-cis,cis-muconate: step 2/2. This Acinetobacter baylyi (strain ATCC 33305 / BD413 / ADP1) protein is 4-carboxymuconolactone decarboxylase (pcaC).